Reading from the N-terminus, the 138-residue chain is Putative pre-16S rRNA nuclease (138 aa).

It belongs to the YqgF nuclease family.

The protein localises to the cytoplasm. Its function is as follows. Could be a nuclease involved in processing of the 5'-end of pre-16S rRNA. The sequence is that of Putative pre-16S rRNA nuclease from Flavobacterium johnsoniae (strain ATCC 17061 / DSM 2064 / JCM 8514 / BCRC 14874 / CCUG 350202 / NBRC 14942 / NCIMB 11054 / UW101) (Cytophaga johnsonae).